The chain runs to 312 residues: Small kinetochore-associated protein (312 aa).

The interval 1 to 171 is disordered; the sequence is MAAPEAEAQE…PFNKQKPEEE (171 aa). A compositionally biased stretch (basic and acidic residues) spans 131-143; it reads DVTKVTKSRRENG. An interaction with SPAG5 region spans residues 156–312; that stretch reads LRNSYKPFNK…LEEMEQLLEM (157 aa). 2 coiled-coil regions span residues 166-210 and 246-287; these read QKPE…LEKF and LLET…QFLE.

Part of an astrin (SPAG5)-kinastrin (SKAP) complex containing KNSTRN, SPAG5, PLK1, DYNLL1 and SGO2A. Interacts with SPAG5. Directly binds to microtubules, although at relatively low affinity. Interacts with CENPE; this interaction greatly favors microtubule-binding. Interacts with DSN1/MIS13; leading to localization to kinetochores. Interacts with MAPRE1/EB1; leading to localization to the microtubule plus ends. Interacts with PRPF19. Interacts with DYNLL1. Interacts with MAP4.

Its subcellular location is the nucleus. It is found in the chromosome. It localises to the centromere. The protein resides in the kinetochore. The protein localises to the cytoplasm. Its subcellular location is the cytoskeleton. It is found in the spindle pole. It localises to the microtubule organizing center. Essential component of the mitotic spindle required for faithful chromosome segregation and progression into anaphase. Promotes the metaphase-to-anaphase transition and is required for chromosome alignment, normal timing of sister chromatid segregation, and maintenance of spindle pole architecture. The astrin (SPAG5)-kinastrin (SKAP) complex promotes stable microtubule-kinetochore attachments. Required for kinetochore oscillations and dynamics of microtubule plus-ends during live cell mitosis, possibly by forming a link between spindle microtubule plus-ends and mitotic chromosomes to achieve faithful cell division. In Mus musculus (Mouse), this protein is Small kinetochore-associated protein (Knstrn).